Here is a 252-residue protein sequence, read N- to C-terminus: Mitochondrial cardiolipin hydrolase (252 aa).

The Mitochondrial intermembrane segment spans residues 1 to 4; the sequence is MGRL. The required for mitochondrial localization stretch occupies residues 1–39; the sequence is MGRLSWQVAAAAAVGLALTLEALPWVLRWLRSRRRRPRR. Residues 5 to 27 traverse the membrane as a helical segment; it reads SWQVAAAAAVGLALTLEALPWVL. The Cytoplasmic portion of the chain corresponds to 28-252; the sequence is RWLRSRRRRP…TCGTSSESQT (225 aa). A C3H1-type; atypical zinc finger spans residues 45–78; the sequence is PSQVTCTEALLRAPGAELAELPEGCPCGLPHGES. Residues 151–178 enclose the PLD phosphodiesterase domain; it reads DPGYMHHKFAIVDKRVLITGSLNWTTQA. Catalysis depends on residues H156, K158, and D163.

Belongs to the phospholipase D family. MitoPLD/Zucchini subfamily. Homodimer. Interacts with MOV10L1. Interacts with MIGA1 and MIGA2; possibly facilitating homodimer formation. Interacts with GK2. As to expression, predominantly expressed in testis and ovary, but not limited to gonads (at protein level). It is also found in brain, heart, pituitary gland, prostate, pancreas, thyroid, bone marrow, lung and muscle.

It is found in the mitochondrion outer membrane. It localises to the golgi apparatus. The catalysed reaction is a cardiolipin + H2O = a 1,2-diacyl-sn-glycero-3-phospho-(1'-sn-glycerol) + a 1,2-diacyl-sn-glycero-3-phosphate + H(+). Its activity is regulated as follows. MYC stimulates its phospholipase activity. MIGA1 and MIGA2 increase PLD6 self-association affinity and affects the homodimer conformation facilitating its phospholipase activity over the nuclease activity. Single stranded DNA (ssDNA) hydrolase activity does not depend upon, but is stimulated by the presence of Ca(2+) and Mn(2+). Functionally, presents phospholipase and nuclease activities, depending on the different physiological conditions. Interaction with Mitoguardin (MIGA1 or MIGA2) affects the dimer conformation, facilitating the lipase activity over the nuclease activity. Plays a key role in mitochondrial fusion and fission via its phospholipase activity. In its phospholipase role, it uses the mitochondrial lipid cardiolipin as substrate to generate phosphatidate (PA or 1,2-diacyl-sn-glycero-3-phosphate), a second messenger signaling lipid. Production of PA facilitates Mitofusin-mediated fusion, whereas the cleavage of PA by the Lipin family of phosphatases produces diacylgycerol (DAG) which promotes mitochondrial fission. Both Lipin and DAG regulate mitochondrial dynamics and membrane fusion/fission, important processes for adapting mitochondrial metabolism to changes in cell physiology. Mitochondrial fusion enables cells to cope with the increased nucleotide demand during DNA synthesis. Mitochondrial function and dynamics are closely associated with biological processes such as cell growth, proliferation, and differentiation. Mediator of MYC activity, promotes mitochondrial fusion and activates AMPK which in turn inhibits YAP/TAZ, thereby inducing cell growth and proliferation. The endonuclease activity plays a critical role in PIWI-interacting RNA (piRNA) biogenesis during spermatogenesis. Implicated in spermatogenesis and sperm fertility in testicular germ cells, its single strand-specific nuclease activity is critical for the biogenesis/maturation of PIWI-interacting RNA (piRNA). MOV10L1 selectively binds to piRNA precursors and funnels them to the endonuclease that catalyzes the first cleavage step of piRNA processing to generate piRNA intermediate fragments that are subsequently loaded to Piwi proteins. Cleaves either DNA or RNA substrates with similar affinity, producing a 5' phosphate end, in this way it participates in the processing of primary piRNA transcripts. piRNAs provide essential protection against the activity of mobile genetic elements. piRNA-mediated transposon silencing is thus critical for maintaining genome stability, in particular in germline cells when transposons are mobilized as a consequence of wide-spread genomic demethylation. PA may act as signaling molecule in the recognition/transport of the precursor RNAs of primary piRNAs. Interacts with tesmin in testes, suggesting a role in spermatogenesis via association with its interacting partner. This Homo sapiens (Human) protein is Mitochondrial cardiolipin hydrolase (PLD6).